The primary structure comprises 197 residues: Transposon Tn552 resolvase (197 aa).

Positions 1 to 136 constitute a Resolvase/invertase-type recombinase catalytic domain; sequence MKIGYARVST…AGRIAARARG (136 aa). The active-site O-(5'-phospho-DNA)-serine intermediate is serine 9. Residues 163 to 182 constitute a DNA-binding region (H-T-H motif); the sequence is IKTIAEQWQVSRTTIYRYLN.

This sequence belongs to the site-specific recombinase resolvase family.

Resolvase catalyzes the resolution (a site-specific recombination) of the cointegrated replicon to yield the final transposition products. The chain is Transposon Tn552 resolvase (tnpR) from Staphylococcus aureus.